A 401-amino-acid chain; its full sequence is Imidazolonepropionase (401 aa).

Residues His-70 and His-72 each contribute to the Fe(3+) site. Zn(2+)-binding residues include His-70 and His-72. Residues Arg-79, Tyr-142, and His-175 each contribute to the 4-imidazolone-5-propanoate site. Tyr-142 lines the N-formimidoyl-L-glutamate pocket. His-238 provides a ligand contact to Fe(3+). His-238 lines the Zn(2+) pocket. Gln-241 lines the 4-imidazolone-5-propanoate pocket. Asp-313 is a Fe(3+) binding site. Zn(2+) is bound at residue Asp-313. Residues Asn-315 and Gly-317 each coordinate N-formimidoyl-L-glutamate. Thr-318 is a binding site for 4-imidazolone-5-propanoate.

The protein belongs to the metallo-dependent hydrolases superfamily. HutI family. The cofactor is Zn(2+). It depends on Fe(3+) as a cofactor.

The protein localises to the cytoplasm. The enzyme catalyses 4-imidazolone-5-propanoate + H2O = N-formimidoyl-L-glutamate. Its pathway is amino-acid degradation; L-histidine degradation into L-glutamate; N-formimidoyl-L-glutamate from L-histidine: step 3/3. Catalyzes the hydrolytic cleavage of the carbon-nitrogen bond in imidazolone-5-propanoate to yield N-formimidoyl-L-glutamate. It is the third step in the universal histidine degradation pathway. The sequence is that of Imidazolonepropionase from Xanthomonas campestris pv. campestris (strain 8004).